Reading from the N-terminus, the 277-residue chain is Large ribosomal subunit protein uL2 (277 aa).

The interval 222–265 is disordered; the sequence is GVAMNPIDHPHGGGEGRTSGGRHPVTPWGKPTKGKKTRTNKSTD.

This sequence belongs to the universal ribosomal protein uL2 family. Part of the 50S ribosomal subunit. Forms a bridge to the 30S subunit in the 70S ribosome.

Its function is as follows. One of the primary rRNA binding proteins. Required for association of the 30S and 50S subunits to form the 70S ribosome, for tRNA binding and peptide bond formation. It has been suggested to have peptidyltransferase activity; this is somewhat controversial. Makes several contacts with the 16S rRNA in the 70S ribosome. The sequence is that of Large ribosomal subunit protein uL2 from Bradyrhizobium sp. (strain BTAi1 / ATCC BAA-1182).